The chain runs to 157 residues: Increased recombination centers protein 23 (157 aa).

Residues 1–6 (MIEALE) are Cytoplasmic-facing. A helical transmembrane segment spans residues 7–29 (IVLLLVIQSLQYICRTCIAFLLI). Residues 30 to 33 (PFLG) lie on the Lumenal side of the membrane. The chain crosses the membrane as a helical span at residues 34-56 (LYAFDLFLYVYRMILYLSQMFNY). The Cytoplasmic segment spans residues 57-157 (KRKLGRSKTN…EEGYYIAGSI (101 aa)).

The protein localises to the endoplasmic reticulum membrane. Functionally, is probably involved in a pathway contributing to genomic integrity. The sequence is that of Increased recombination centers protein 23 (IRC23) from Saccharomyces cerevisiae (strain ATCC 204508 / S288c) (Baker's yeast).